The following is a 396-amino-acid chain: S-adenosylmethionine synthase 3 (396 aa).

Glu13 lines the Mg(2+) pocket. Position 19 (His19) interacts with ATP. Residue Glu47 participates in K(+) binding. Glu60 and Gln103 together coordinate L-methionine. Residues 171-173 (DGK), 239-242 (SGRF), Asp250, 256-257 (RK), Ala273, Lys277, and Lys281 each bind ATP. Residue Asp250 participates in L-methionine binding. An L-methionine-binding site is contributed by Lys281.

The protein belongs to the AdoMet synthase family. As to quaternary structure, homotetramer. Requires Mn(2+) as cofactor. Mg(2+) serves as cofactor. Co(2+) is required as a cofactor. The cofactor is K(+). Expressed in roots, stems and leaves (at protein level).

The protein localises to the cytoplasm. The catalysed reaction is L-methionine + ATP + H2O = S-adenosyl-L-methionine + phosphate + diphosphate. Its pathway is amino-acid biosynthesis; S-adenosyl-L-methionine biosynthesis; S-adenosyl-L-methionine from L-methionine: step 1/1. In terms of biological role, catalyzes the formation of S-adenosylmethionine from methionine and ATP. The reaction comprises two steps that are both catalyzed by the same enzyme: formation of S-adenosylmethionine (AdoMet) and triphosphate, and subsequent hydrolysis of the triphosphate. May be involved in the synthesis of betain in response to abiotic stress such as high salinity. This is S-adenosylmethionine synthase 3 (SAMS3) from Atriplex nummularia (Old man saltbush).